A 3387-amino-acid polypeptide reads, in one-letter code: Genome polyprotein (3387 aa).

The Cytoplasmic segment spans residues 1–100; it reads MNQRKKVARP…LNILNGRKRS (100 aa). The interval 36–71 is hydrophobic; homodimerization of capsid protein C; the sequence is LFSGKGPLRMVLAFITFLRVLSIPPTAGILKRWGQL. The propeptide at 100–113 is ER anchor for the capsid protein C, removed in mature form by serine protease NS3; the sequence is STITLLCLIPTVMA. The chain crosses the membrane as a helical span at residues 101–117; sequence TITLLCLIPTVMAFHLS. Residues 118-237 are Extracellular-facing; that stretch reads TRDGEPLMIV…GAWKHAQRVE (120 aa). Asn182 is a glycosylation site (N-linked (GlcNAc...) asparagine; by host). Residues 238 to 258 traverse the membrane as a helical segment; sequence SWILRNPGFALLAGFMAYMIG. Residues 259 to 265 are Cytoplasmic-facing; the sequence is QTGIQRT. Residues 266 to 279 traverse the membrane as a helical segment; the sequence is VFFILMMLVAPSYG. Residues 280 to 725 lie on the Extracellular side of the membrane; it reads MRCVGVGNRD…HQVFGSVYTT (446 aa). 4 cysteine pairs are disulfide-bonded: Cys282–Cys309, Cys339–Cys400, Cys353–Cys384, and Cys371–Cys395. N-linked (GlcNAc...) asparagine; by host glycosylation occurs at Asn346. The tract at residues 377–390 is fusion peptide; it reads DRGWGNGCGLFGKG. An N-linked (GlcNAc...) asparagine; by host glycan is attached at Asn432. Disulfide bonds link Cys464-Cys564 and Cys581-Cys612. Residues 726–746 form a helical membrane-spanning segment; it reads MFGGVSWMVRILIGLLVLWIG. The Cytoplasmic segment spans residues 747–753; the sequence is TNSRNTS. The helical transmembrane segment at 754-774 threads the bilayer; that stretch reads MAMSCIAVGGITLFLGFTVHA. Over 775–1194 the chain is Extracellular; sequence DMGCAVSWSG…MLGDTMSGRM (420 aa). Intrachain disulfides connect Cys778/Cys789, Cys829/Cys917, Cys953/Cys997, Cys1054/Cys1103, Cys1065/Cys1087, and Cys1086/Cys1090. Residues Asn904 and Asn981 are each glycosylated (N-linked (GlcNAc...) asparagine; by host). A helical membrane pass occupies residues 1195-1218; sequence GGQIHLAIMAVFKMSPGYVLGIFL. Residues 1219-1224 are Lumenal-facing; the sequence is RKLTSR. The chain crosses the membrane as a helical span at residues 1225–1243; the sequence is ETALMVIGMAMTTVLSIPH. The Cytoplasmic segment spans residues 1244–1267; that stretch reads DLMEFIDGISLGLILLKMVTHFDN. A helical transmembrane segment spans residues 1268–1288; it reads TQVGTLALSLTFIKSTMPLVM. Ala1289 is a topological domain (lumenal). Residues 1290-1308 form a helical membrane-spanning segment; that stretch reads WRTIMAVLFVVTLIPLCRT. At 1309-1316 the chain is on the lumenal side; it reads SCLQKQSH. Residues 1317–1337 form a helical membrane-spanning segment; that stretch reads WVEITALILGAQALPVYLMTL. Over 1338-1345 the chain is Cytoplasmic; it reads MKGASKRS. The chain crosses the membrane as a helical span at residues 1346 to 1366; the sequence is WPLNEGIMAVGLVSLLGSALL. At 1367-1369 the chain is on the lumenal side; that stretch reads KND. The chain crosses the membrane as a helical span at residues 1370-1390; it reads VPLAGPMVAGGLLLAAYVMSG. At 1391–1437 the chain is on the cytoplasmic side; the sequence is SSADLSLEKAANVQWDEMADITGSSPIIEVKQDEDGSFSIRDVEETN. Residues 1397–1436 form an interacts with and activates NS3 protease region; sequence LEKAANVQWDEMADITGSSPIIEVKQDEDGSFSIRDVEET. Positions 1438–1458 form an intramembrane region, helical; sequence MITLLVKLALITVSGLYPLAI. Over 1459 to 2143 the chain is Cytoplasmic; sequence PVTMTLWYMW…QHALNELPES (685 aa). One can recognise a Peptidase S7 domain in the interval 1475–1652; that stretch reads SGALWDVPSP…ERIGEPDYEV (178 aa). Active-site charge relay system; for serine protease NS3 activity residues include His1525, Asp1549, and Ser1609. The region spanning 1654-1810 is the Helicase ATP-binding domain; the sequence is EDIFRKKRLT…QSNSPIEDIE (157 aa). Residues 1658–1661 are important for RNA-binding; it reads RKKR. Residue 1667 to 1674 participates in ATP binding; that stretch reads LHPGAGKT. Positions 1758 to 1761 match the DEAH box motif; that stretch reads DEAH. The 168-residue stretch at 1820-1987 folds into the Helicase C-terminal domain; it reads TGFDWITDYQ…IIPTLFGPER (168 aa). Lys1862 bears the N6-acetyllysine; by host mark. Residues 2144–2164 traverse the membrane as a helical segment; it reads LETLMLVALLGAMTAGIFLFF. The Lumenal portion of the chain corresponds to 2165 to 2169; it reads MQGKG. The segment at residues 2170–2190 is an intramembrane region (helical); it reads IGKLSMGLIAIAVASGLLWVA. Glu2191 is a topological domain (lumenal). A helical transmembrane segment spans residues 2192 to 2212; it reads IQPQWIAASIILEFFLMVLLV. The Cytoplasmic segment spans residues 2213–2225; the sequence is PEPEKQRTPQDNQ. Residues 2226–2246 form a helical membrane-spanning segment; sequence LIYVILTILTIIALVAANEMG. The Lumenal portion of the chain corresponds to 2247–2270; it reads LIEKTKTDFGFYQAKTETTILDVD. The helical intramembrane region spans 2271 to 2291; it reads LRPASAWTLYAVATTILTPML. Over 2292 to 2301 the chain is Lumenal; the sequence is RHTIENTSAN. Asn2297 and Asn2301 each carry an N-linked (GlcNAc...) asparagine; by host glycan. The helical intramembrane region spans 2302 to 2322; it reads LSLAAIANQAAVLMGLGKGWP. The Lumenal segment spans residues 2323 to 2343; sequence LHRMDLGVPLLAMGCYSQVNP. The helical transmembrane segment at 2344–2364 threads the bilayer; the sequence is TTLTASLVMLLVHYAIIGPGL. The Cytoplasmic portion of the chain corresponds to 2365–2409; it reads QAKATREAQKRTAAGIMKNPTVDGITVIDLEPISYDPKFEKQLGQ. A helical membrane pass occupies residues 2410-2430; the sequence is VMLLVLCAGQLLLMRTTWAFC. The Lumenal portion of the chain corresponds to 2431–2455; sequence EVLTLATGPILTLWEGNPGRFWNTT. Asn2453 carries an N-linked (GlcNAc...) asparagine; by host glycan. Residues 2456-2476 traverse the membrane as a helical segment; sequence IAVSTANIFRGSYLAGAGLAF. Topologically, residues 2477–3387 are cytoplasmic; that stretch reads SLIKNAQTPR…SAHFESEGVL (911 aa). The mRNA cap 0-1 NS5-type MT domain occupies 2489–2751; it reads TGTTGETLGE…DADLGAGTRS (263 aa). Residue Ser2543 coordinates S-adenosyl-L-methionine. Ser2543 carries the phosphoserine modification. Lys2548 functions as the For 2'-O-MTase activity in the catalytic mechanism. Residues 2564-2567 carry the SUMO-interacting motif motif; that stretch reads VVDL. Gly2573, Trp2574, Thr2591, Lys2592, Asp2618, and Val2619 together coordinate S-adenosyl-L-methionine. Catalysis depends on Asp2633, which acts as the For 2'-O-MTase activity. Residue Ile2634 participates in S-adenosyl-L-methionine binding. Active-site for 2'-O-MTase activity residues include Lys2668 and Glu2704. Tyr2706 provides a ligand contact to S-adenosyl-L-methionine. 4 residues coordinate Zn(2+): Glu2925, His2929, Cys2934, and Cys2937. Residues 3016–3166 enclose the RdRp catalytic domain; sequence LIYADDTAGW…PLDERFSTSL (151 aa). Positions 3200, 3216, and 3335 each coordinate Zn(2+).

It in the N-terminal section; belongs to the class I-like SAM-binding methyltransferase superfamily. mRNA cap 0-1 NS5-type methyltransferase family. Homodimer. Interacts (via N-terminus) with host EXOC1 (via C-terminus); this interaction results in EXOC1 degradation through the proteasome degradation pathway. As to quaternary structure, forms heterodimers with envelope protein E in the endoplasmic reticulum and Golgi. In terms of assembly, homodimer; in the endoplasmic reticulum and Golgi. Interacts with protein prM. Interacts with non-structural protein 1. Homodimer; Homohexamer when secreted. Interacts with envelope protein E. As to quaternary structure, interacts (via N-terminus) with serine protease NS3. In terms of assembly, forms a heterodimer with serine protease NS3. May form homooligomers. Forms a heterodimer with NS2B. Interacts with NS4B. Interacts with unphosphorylated RNA-directed RNA polymerase NS5; this interaction stimulates RNA-directed RNA polymerase NS5 guanylyltransferase activity. Interacts with host SHFL. As to quaternary structure, interacts with host MAVS; this interaction inhibits the synthesis of IFN-beta. Interacts with host SHFL. Interacts with host AUP1; the interaction occurs in the presence of Dengue virus NS4B and induces lipophagy which facilitates production of virus progeny particles. In terms of assembly, interacts with serine protease NS3. Homodimer. Interacts with host STAT2; this interaction inhibits the phosphorylation of the latter, and, when all viral proteins are present (polyprotein), targets STAT2 for degradation. Interacts with serine protease NS3. Interacts with host PAF1 complex; the interaction may prevent the recruitment of the PAF1 complex to interferon-responsive genes, and thus reduces the immune response. Post-translationally, specific enzymatic cleavages in vivo yield mature proteins. Cleavages in the lumen of endoplasmic reticulum are performed by host signal peptidase, whereas cleavages in the cytoplasmic side are performed by serine protease NS3. Signal cleavage at the 2K-4B site requires a prior NS3 protease-mediated cleavage at the 4A-2K site. Cleaved in post-Golgi vesicles by a host furin, releasing the mature small envelope protein M, and peptide pr. This cleavage is incomplete as up to 30% of viral particles still carry uncleaved prM. In terms of processing, N-glycosylated. Post-translationally, N-glycosylated. The excreted form is glycosylated and this is required for efficient secretion of the protein from infected cells. Acetylated by host KAT5. Acetylation modulates NS3 RNA-binding and unwinding activities and plays an important positive role for viral replication. In terms of processing, sumoylation of RNA-directed RNA polymerase NS5 increases NS5 protein stability allowing proper viral RNA replication. Post-translationally, phosphorylated on serines residues. This phosphorylation may trigger NS5 nuclear localization.

It is found in the virion. The protein localises to the host nucleus. It localises to the host cytoplasm. The protein resides in the host perinuclear region. Its subcellular location is the secreted. It is found in the virion membrane. The protein localises to the host endoplasmic reticulum membrane. It localises to the host mitochondrion. The catalysed reaction is Selective hydrolysis of -Xaa-Xaa-|-Yaa- bonds in which each of the Xaa can be either Arg or Lys and Yaa can be either Ser or Ala.. It catalyses the reaction RNA(n) + a ribonucleoside 5'-triphosphate = RNA(n+1) + diphosphate. The enzyme catalyses a ribonucleoside 5'-triphosphate + H2O = a ribonucleoside 5'-diphosphate + phosphate + H(+). It carries out the reaction ATP + H2O = ADP + phosphate + H(+). The catalysed reaction is a 5'-end (5'-triphosphoguanosine)-ribonucleoside in mRNA + S-adenosyl-L-methionine = a 5'-end (N(7)-methyl 5'-triphosphoguanosine)-ribonucleoside in mRNA + S-adenosyl-L-homocysteine. It catalyses the reaction a 5'-end (N(7)-methyl 5'-triphosphoguanosine)-ribonucleoside in mRNA + S-adenosyl-L-methionine = a 5'-end (N(7)-methyl 5'-triphosphoguanosine)-(2'-O-methyl-ribonucleoside) in mRNA + S-adenosyl-L-homocysteine + H(+). Functionally, plays a role in virus budding by binding to the cell membrane and gathering the viral RNA into a nucleocapsid that forms the core of a mature virus particle. During virus entry, may induce genome penetration into the host cytoplasm after hemifusion induced by the surface proteins. Can migrate to the cell nucleus where it modulates host functions. Overcomes the anti-viral effects of host EXOC1 by sequestering and degrading the latter through the proteasome degradation pathway. Its function is as follows. Inhibits RNA silencing by interfering with host Dicer. In terms of biological role, prevents premature fusion activity of envelope proteins in trans-Golgi by binding to envelope protein E at pH6.0. After virion release in extracellular space, gets dissociated from E dimers. Acts as a chaperone for envelope protein E during intracellular virion assembly by masking and inactivating envelope protein E fusion peptide. prM is the only viral peptide matured by host furin in the trans-Golgi network probably to avoid catastrophic activation of the viral fusion activity in acidic Golgi compartment prior to virion release. prM-E cleavage is inefficient, and many virions are only partially matured. These uncleaved prM would play a role in immune evasion. Functionally, may play a role in virus budding. Exerts cytotoxic effects by activating a mitochondrial apoptotic pathway through M ectodomain. May display a viroporin activity. Its function is as follows. Binds to host cell surface receptor and mediates fusion between viral and cellular membranes. Envelope protein is synthesized in the endoplasmic reticulum in the form of heterodimer with protein prM. They play a role in virion budding in the ER, and the newly formed immature particle is covered with 60 spikes composed of heterodimer between precursor prM and envelope protein E. The virion is transported to the Golgi apparatus where the low pH causes dissociation of PrM-E heterodimers and formation of E homodimers. prM-E cleavage is inefficient, and many virions are only partially matured. These uncleaved prM would play a role in immune evasion. In terms of biological role, involved in immune evasion, pathogenesis and viral replication. Once cleaved off the polyprotein, is targeted to three destinations: the viral replication cycle, the plasma membrane and the extracellular compartment. Essential for viral replication. Required for formation of the replication complex and recruitment of other non-structural proteins to the ER-derived membrane structures. Excreted as a hexameric lipoparticle that plays a role against host immune response. Antagonizing the complement function. Binds to the host macrophages and dendritic cells. Inhibits signal transduction originating from Toll-like receptor 3 (TLR3). Disrupts the host endothelial glycocalyx layer of host pulmonary microvascular endothelial cells, inducing degradation of sialic acid and shedding of heparan sulfate proteoglycans. NS1 induces expression of sialidases, heparanase, and activates cathepsin L, which activates heparanase via enzymatic cleavage. These effects are probably linked to the endothelial hyperpermeability observed in severe dengue disease. Functionally, component of the viral RNA replication complex that functions in virion assembly and antagonizes the host immune response. Its function is as follows. Required cofactor for the serine protease function of NS3. May have membrane-destabilizing activity and form viroporins. In terms of biological role, displays three enzymatic activities: serine protease, NTPase and RNA helicase. NS3 serine protease, in association with NS2B, performs its autocleavage and cleaves the polyprotein at dibasic sites in the cytoplasm: C-prM, NS2A-NS2B, NS2B-NS3, NS3-NS4A, NS4A-2K and NS4B-NS5. NS3 RNA helicase binds RNA and unwinds dsRNA in the 3' to 5' direction. Regulates the ATPase activity of the NS3 helicase activity. NS4A allows NS3 helicase to conserve energy during unwinding. Plays a role in the inhibition of the host innate immune response. Interacts with host MAVS and thereby prevents the interaction between RIGI and MAVS. In turn, IFN-beta production is impaired. Interacts with host AUP1 which mediates induction of lipophagy in host cells and facilitates production of virus progeny particles. Functionally, functions as a signal peptide for NS4B and is required for the interferon antagonism activity of the latter. Its function is as follows. Induces the formation of ER-derived membrane vesicles where the viral replication takes place. Inhibits interferon (IFN)-induced host STAT1 phosphorylation and nuclear translocation, thereby preventing the establishment of cellular antiviral state by blocking the IFN-alpha/beta pathway. In terms of biological role, replicates the viral (+) and (-) RNA genome, and performs the capping of genomes in the cytoplasm. NS5 methylates viral RNA cap at guanine N-7 and ribose 2'-O positions. Besides its role in RNA genome replication, also prevents the establishment of cellular antiviral state by blocking the interferon-alpha/beta (IFN-alpha/beta) signaling pathway. Inhibits host TYK2 and STAT2 phosphorylation, thereby preventing activation of JAK-STAT signaling pathway. May reduce immune responses by preventing the recruitment of the host PAF1 complex to interferon-responsive genes. This is Genome polyprotein from Dengue virus type 4 (strain Thailand/0348/1991) (DENV-4).